Reading from the N-terminus, the 283-residue chain is Urease accessory protein UreD 1 (283 aa).

This sequence belongs to the UreD family. In terms of assembly, ureD, UreF and UreG form a complex that acts as a GTP-hydrolysis-dependent molecular chaperone, activating the urease apoprotein by helping to assemble the nickel containing metallocenter of UreC. The UreE protein probably delivers the nickel.

Its subcellular location is the cytoplasm. Its function is as follows. Required for maturation of urease via the functional incorporation of the urease nickel metallocenter. In Brucella anthropi (strain ATCC 49188 / DSM 6882 / CCUG 24695 / JCM 21032 / LMG 3331 / NBRC 15819 / NCTC 12168 / Alc 37) (Ochrobactrum anthropi), this protein is Urease accessory protein UreD 1.